The chain runs to 89 residues: Small ribosomal subunit protein uS15 (89 aa).

It belongs to the universal ribosomal protein uS15 family. In terms of assembly, part of the 30S ribosomal subunit. Forms a bridge to the 50S subunit in the 70S ribosome, contacting the 23S rRNA.

Its function is as follows. One of the primary rRNA binding proteins, it binds directly to 16S rRNA where it helps nucleate assembly of the platform of the 30S subunit by binding and bridging several RNA helices of the 16S rRNA. In terms of biological role, forms an intersubunit bridge (bridge B4) with the 23S rRNA of the 50S subunit in the ribosome. The chain is Small ribosomal subunit protein uS15 from Mycobacterium avium (strain 104).